A 461-amino-acid chain; its full sequence is Aldehyde dehydrogenase LUC3 (461 aa).

Residue 215–220 coordinates NAD(+); that stretch reads GSTATG. Residues Glu237 and Cys271 contribute to the active site.

The protein belongs to the aldehyde dehydrogenase family.

The enzyme catalyses an aldehyde + NAD(+) + H2O = a carboxylate + NADH + 2 H(+). Its pathway is mycotoxin biosynthesis. Functionally, aldehyde dehydrogenase; part of the gene cluster that mediates the biosynthesis of the mycotoxin lucilactaene and the lucilactaene-related compound NG-391 that act as cell cycle inhibitors with potent growth inhibitory activity against malarial parasites, moderate growth inhibitory activity against cancer cells, and no activity against bacteria and fungi. LUC3 is important for lucilactaene biosynthesis and performs the oxidation of the C-20 alcoholic analog prelucilactaene G into a carboxylic derivative that has still to be identified. The pathway begins with the hybrid PKS-NRPS synthetase LUC5 which is responsible for the condensation of one acetyl-coenzyme A (CoA) unit with six malonyl-CoA units and the amide linkage of the arising heptaketide and homoserine, subsequently releasing the first intermediate prelucilactaene B. Both the cytochrome P450 monooxygenase LUC2 and the hydrolase LUC6 function in parallel in modification of prelucilactaene B. LUC6 may catalyze the 2-pyrrolidone ring formation to form prelucilactaene C from prelucilactaene B, followed by C-15 hydroxylation by the same enzyme to give prelucilactaene D, which is then converted to prelucilactaene E by epoxidation, and finally to prelucilactaene F by cyclization. Prelucilactane D, prelucilactaene E, and prelucilactaene F can be converted to dihydrolucilactaene, NG391, and lucilactaene, respectively, via C-20 methyl group hydroxylation by the cytochrome P450 monooxygenase LUC2. However, LUC2, unlike FUS8 in fusarin C biosynthesis, is not enough for the full oxidation of the C-20 methyl group into carboxylic acid, which is a prerequisite for the final methylation step. The aldehyde dehydrogenase LUC3 is involved in the biosynthesis by further oxidation of the C-20 alcoholic analog prelucilactaene G into a carboxylic derivative. This unidentified carboxylic derivative may be converted to demethyllucilactaene. As the last step, the methyltransferase LUC1 methylates the hydroxyl group at C-21 of demethyllucilactaene to generate lucilactaene. The protein is Aldehyde dehydrogenase LUC3 of Fusarium sp.